A 451-amino-acid polypeptide reads, in one-letter code: Epi-neemfruitin B 7-O-acetyltransferse L7AT (451 aa).

Residues His165 and Asp384 each act as proton acceptor in the active site.

The protein belongs to the plant acyltransferase family. In terms of assembly, monomer. Mainly expressed in petioles and, to a lower extent, in roots.

The catalysed reaction is epi-neemfruitin B + acetyl-CoA = 7-acetyl-epi-neemfruitin B + CoA. It functions in the pathway secondary metabolite biosynthesis; terpenoid biosynthesis. Acetyltransferase involved in the biosynthesis of limonoids triterpene natural products such as azadirachtin, an antifeedant widely used as bioinsecticide, and possessing many medicinal applications including anti-tumoral, anti-malarial, anti-rheumatic, antibacterial, anti-inflammatory, anti-pyretic and diuretic effects. Catalyzes the formation of 7-acetyl-epi-neemfruitin B from epi-neemfruitin B. The chain is Epi-neemfruitin B 7-O-acetyltransferse L7AT from Melia azedarach (Chinaberry tree).